Here is a 1192-residue protein sequence, read N- to C-terminus: Protein FAM83H (1192 aa).

Disordered regions lie at residues 435–542 (EGMG…VKQG), 557–661 (DGGE…LAEP), 695–720 (SKLEQHNSSQAKSGGELQEEKEESEP), 737–1082 (LSRE…SNII), and 1094–1145 (ILEQ…ERDN). A compositionally biased stretch (basic and acidic residues) spans 437–447 (MGHDDRGHYDR). Composition is skewed to polar residues over residues 523 to 538 (QLFSTGDQVRQSQDPS) and 629 to 652 (SDLGPTSTDTLKPAISASSLASST). 2 stretches are compositionally biased toward basic and acidic residues: residues 737–759 (LSREPFDWNKHKKADEKDVKHAS) and 768–789 (DTKEEPIKEKEKPDNPKPEENK). Positions 790–810 (VTQPTVPSASQQITSSLNMND) are enriched in polar residues. Residues 820–834 (DQQEKRKTSKLELDL) show a composition bias toward basic and acidic residues. A compositionally biased stretch (polar residues) spans 861–878 (TSEQSTVKAQEPTVSQTD). Composition is skewed to basic and acidic residues over residues 880 to 892 (VPHRPVIETKPKP) and 914 to 925 (APKKEPVKEPTK). Positions 926-946 (SLKPFPSPKFLKPFKSSQSSS) are enriched in low complexity. The segment covering 994–1005 (ESKDTKALDFLK) has biased composition (basic and acidic residues). The span at 1068 to 1082 (KPTTSRYQSSTSNII) shows a compositional bias: polar residues. Over residues 1107–1122 (QQNEESGKGDGGKDDV) the composition is skewed to basic and acidic residues.

This sequence belongs to the FAM83 family.

It is found in the cytoplasm. Its subcellular location is the cytoskeleton. Functionally, may play a role in keratin cytoskeleton disassembly. This chain is Protein FAM83H, found in Danio rerio (Zebrafish).